The primary structure comprises 109 residues: Small ribosomal subunit protein bS6 (109 aa).

This sequence belongs to the bacterial ribosomal protein bS6 family.

Its function is as follows. Binds together with bS18 to 16S ribosomal RNA. The protein is Small ribosomal subunit protein bS6 of Dehalococcoides mccartyi (strain ATCC BAA-2266 / KCTC 15142 / 195) (Dehalococcoides ethenogenes (strain 195)).